The primary structure comprises 1322 residues: Ice nucleation protein InaA (1322 aa).

The tract at residues 162–1281 (ATYGSTLSGT…LTAGENSVLI (1120 aa)) is octapeptide periodicity. Polar residues-rich tracts occupy residues 271–302 (SLTA…QKGS), 327–350 (TQTA…QKGS), 373–398 (GSTQ…QKGS), and 423–446 (TQTA…QKGS). 4 disordered regions span residues 271–303 (SLTA…KGSD), 327–358 (TQTA…GYGS), 372–399 (YGST…KGSD), and 423–448 (TQTA…GSDL).

This sequence belongs to the bacterial ice nucleation protein family.

The protein resides in the cell outer membrane. Its function is as follows. Ice nucleation proteins enable bacteria to nucleate crystallization in supercooled water. This is Ice nucleation protein InaA (inaA) from Pantoea ananas (Erwinia uredovora).